Here is a 231-residue protein sequence, read N- to C-terminus: NADH-ubiquinone oxidoreductase chain 4 (231 aa).

A run of 6 helical transmembrane segments spans residues 1 to 21, 34 to 54, 61 to 80, 85 to 107, 128 to 148, and 169 to 189; these read PIAG…YGII, MFLP…LTCL, SLIA…AIII, GLAG…FCLA, ILPM…AIPP, and TIIL…HMFL.

It belongs to the complex I subunit 4 family.

Its subcellular location is the mitochondrion membrane. The catalysed reaction is a ubiquinone + NADH + 5 H(+)(in) = a ubiquinol + NAD(+) + 4 H(+)(out). Functionally, core subunit of the mitochondrial membrane respiratory chain NADH dehydrogenase (Complex I) that is believed to belong to the minimal assembly required for catalysis. Complex I functions in the transfer of electrons from NADH to the respiratory chain. The immediate electron acceptor for the enzyme is believed to be ubiquinone. The polypeptide is NADH-ubiquinone oxidoreductase chain 4 (MT-ND4) (Gloydius blomhoffii (Mamushi)).